Reading from the N-terminus, the 1154-residue chain is BEACH domain-containing protein lvsF (1154 aa).

Disordered regions lie at residues 92–123 (HLPT…EQPS) and 139–167 (TSKV…PTPT). Over residues 145-158 (PTPPTPTPTPPTPQ) the composition is skewed to pro residues. The BEACH-type PH domain maps to 289-384 (DMNERNILEL…TRNQVYDLLV (96 aa)). Residues 389 to 697 (TNIMHINEQA…QIFKTPHPQR (309 aa)) form the BEACH domain. Disordered regions lie at residues 554–575 (SFES…NFEN), 739–762 (NNLN…LNNN), and 779–825 (NSLN…ENLN). Low complexity-rich tracts occupy residues 779-788 (NSLNNENNEN) and 795-822 (NSNS…NENE). WD repeat units follow at residues 858–897 (LHKD…QIRS), 900–939 (LCNL…ISYS), 942–980 (GHSD…NGAI), 992–1031 (DSDT…LIRR), 1034–1074 (CFFD…FSFK), 1076–1110 (KGEI…EIKD), and 1119–1154 (SSNE…IWQQ).

In Dictyostelium discoideum (Social amoeba), this protein is BEACH domain-containing protein lvsF (lvsF).